The sequence spans 231 residues: MVSFKSLLVAVSALTGALARPFDFLDERDDGNATSVLEARQVTGNSEGYHNGYFYSWWSDGGGYAQYRMGEGSHYQVDWRNTGNFVGGKGWNPGTGRTINYGGSFNPQGNGYLCVYGWTRGPLVEYYVIESYGSYNPGSQAQHRGTVYTDGDTYDLYMSTRYQQPSIDGVQTFNQYWSIRRNKRTSGSVNMQNHFNAWRSAGMNLGNHYYQILATEGYQSSGSSSIYVQTS.

The signal sequence occupies residues 1–19 (MVSFKSLLVAVSALTGALA). The N-linked (GlcNAc...) asparagine glycan is linked to Asn-32. Residues 41-229 (QVTGNSEGYH…SSGSSSIYVQ (189 aa)) form the GH11 domain. Glu-125 functions as the Nucleophile in the catalytic mechanism. The active-site Proton donor is Glu-216.

The protein belongs to the glycosyl hydrolase 11 (cellulase G) family.

It localises to the secreted. The catalysed reaction is Endohydrolysis of (1-&gt;4)-beta-D-xylosidic linkages in xylans.. It functions in the pathway glycan degradation; xylan degradation. Inhibited by the proteinaceous endoxylanase inhibitor I from T.aestivum (TAXI-I). Endo-1,4-beta-xylanase involved in the hydrolysis of xylan, a major structural heterogeneous polysaccharide found in plant biomass representing the second most abundant polysaccharide in the biosphere, after cellulose. Plays an important role in causing fusarium head blight (FHB) on cereal crops. The chain is Endo-1,4-beta-xylanase A (XYLA) from Gibberella zeae (strain ATCC MYA-4620 / CBS 123657 / FGSC 9075 / NRRL 31084 / PH-1) (Wheat head blight fungus).